Here is a 124-residue protein sequence, read N- to C-terminus: Glycine cleavage system H protein (124 aa).

The region spanning 19 to 101 (TGTVGITDYA…AGKGWFLQIK (83 aa)) is the Lipoyl-binding domain. Lys60 bears the N6-lipoyllysine mark.

It belongs to the GcvH family. The glycine cleavage system is composed of four proteins: P, T, L and H. Requires (R)-lipoate as cofactor.

Functionally, the glycine cleavage system catalyzes the degradation of glycine. The H protein shuttles the methylamine group of glycine from the P protein to the T protein. This chain is Glycine cleavage system H protein, found in Beijerinckia indica subsp. indica (strain ATCC 9039 / DSM 1715 / NCIMB 8712).